Here is a 317-residue protein sequence, read N- to C-terminus: Forkhead box protein B2 (317 aa).

The segment at residues 13–107 is a DNA-binding region (fork-head); the sequence is KPPYSYISLT…ENGSFLRRRK (95 aa).

In terms of tissue distribution, first expressed within the dorsolateral ectoderm, except for the organizer territory. During gastrulation, expressed in 2 ectodermal stripes adjacent to the dorsal midline. With the onset of neurulation, expression shifts first to the neural plate before settling on the bottom of the neural tube, on top of the notochord. Expression is then absent until stage 35, at which stage a pair of cells in the fourth rhombomere in the dorsolateral outer area of the rhombencephalon show expression. This is followed shortly afterwards by expression in a pair of cells in rhombomere 6 at the ventricular side of the rhombencephalon.

Its subcellular location is the nucleus. Transcription factor. The polypeptide is Forkhead box protein B2 (Xenopus laevis (African clawed frog)).